The primary structure comprises 534 residues: Inorganic phosphate transporter 1-6 (534 aa).

At 1–29 (MGGGGGEQQQLEVLHALDVAKTQWYHFTA) the chain is on the cytoplasmic side. A helical transmembrane segment spans residues 30-50 (IVVAGMGFFTDAYDLFCISLV). Residues 51-75 (TKLLGRIYYRVDGSPSPGTLPPHVS) lie on the Extracellular side of the membrane. Residues 76 to 96 (ASVNGVAFVGTLSGQLFFGWL) form a helical membrane-spanning segment. Topologically, residues 97–104 (GDKLGRKR) are cytoplasmic. Residues 105–125 (VYGITLMLMVLCSLASALSFG) form a helical membrane-spanning segment. Residues 126-127 (HT) are Extracellular-facing. A helical membrane pass occupies residues 128-148 (PTSVMATLCFFRFWLGFGIGG). At 149–168 (DYPLSATIMSEYANKKTRGA) the chain is on the cytoplasmic side. The chain crosses the membrane as a helical span at residues 169–189 (FIAAVFAMQGFGIITGGLVAI). The Extracellular portion of the chain corresponds to 190–216 (LVSASFRAAFPAPPYGEDPVASTPPQA). Residues 217-237 (DFVWRIILMLGALPAALTYYW) traverse the membrane as a helical segment. Residues 238–294 (RTKMPETARYTALVANNAKQAAADMSKVLQVVEMRNIGNNGGSRRPFGLFSGEFVRR) are Cytoplasmic-facing. Residues 295–315 (HGLHLVGTSATWLLLDIAFYS) traverse the membrane as a helical segment. Topologically, residues 316–350 (QNLFQKDIFSAVGWIPKAATMSALEELFRIARAQT) are extracellular. Residues 351–371 (LIALCGTVPGYWFTVALIDVV) traverse the membrane as a helical segment. The Cytoplasmic segment spans residues 372–375 (GRFK). Residues 376 to 396 (IQAVGFFMMTLFMLTLALPYH) form a helical membrane-spanning segment. The Extracellular segment spans residues 397–405 (HWTAPGKNH). The chain crosses the membrane as a helical span at residues 406–426 (VGFLLLYGLTFFFANFGPNST). At 427-445 (TFIVPAEIFPARLRATCHG) the chain is on the cytoplasmic side. The chain crosses the membrane as a helical span at residues 446 to 466 (ISAASGKLGAIVGSFGFLYLA). Residues 467-486 (QSPDRSKTEHGYPPGIGVRN) are Extracellular-facing. Residues 487-507 (SLFLLAACNLLGLLFTFLVPE) traverse the membrane as a helical segment. The Cytoplasmic segment spans residues 508 to 534 (SKGKSLEEMSGDAEAQEEAPPPLQTVL). The interval 514 to 534 (EEMSGDAEAQEEAPPPLQTVL) is disordered.

It belongs to the major facilitator superfamily. Phosphate:H(+) symporter (TC 2.A.1.9) family. In terms of tissue distribution, highly expressed in leaves and at low levels in roots. Expressed in leaf xylem parenchyma cells.

The protein resides in the membrane. Its function is as follows. High-affinity transporter for external inorganic phosphate (Pi). Probably involved in Pi uptake, translocation and internal transport throughout the plant. The protein is Inorganic phosphate transporter 1-6 (PHT1-6) of Oryza sativa subsp. japonica (Rice).